A 327-amino-acid chain; its full sequence is Phospho-N-acetylmuramoyl-pentapeptide-transferase (327 aa).

The next 10 helical transmembrane spans lie at 3–23 (TAII…PAFI), 51–71 (TMGG…IALF), 79–99 (VTTI…DDFL), 115–135 (LFLQ…HGGG), 140–160 (VFGF…FWLV), 172–192 (IDGL…VIAL), 197–217 (FDLL…FGFN), 223–243 (IFMG…LSIA), 248–268 (WTLL…MLQV), and 306–326 (VDFL…AILY).

The protein belongs to the glycosyltransferase 4 family. MraY subfamily. Mg(2+) is required as a cofactor.

The protein resides in the cell membrane. It carries out the reaction UDP-N-acetyl-alpha-D-muramoyl-L-alanyl-gamma-D-glutamyl-L-lysyl-D-alanyl-D-alanine + di-trans,octa-cis-undecaprenyl phosphate = Mur2Ac(oyl-L-Ala-gamma-D-Glu-L-Lys-D-Ala-D-Ala)-di-trans,octa-cis-undecaprenyl diphosphate + UMP. It participates in cell wall biogenesis; peptidoglycan biosynthesis. Its function is as follows. Catalyzes the initial step of the lipid cycle reactions in the biosynthesis of the cell wall peptidoglycan: transfers peptidoglycan precursor phospho-MurNAc-pentapeptide from UDP-MurNAc-pentapeptide onto the lipid carrier undecaprenyl phosphate, yielding undecaprenyl-pyrophosphoryl-MurNAc-pentapeptide, known as lipid I. This Streptococcus gordonii (strain Challis / ATCC 35105 / BCRC 15272 / CH1 / DL1 / V288) protein is Phospho-N-acetylmuramoyl-pentapeptide-transferase.